Reading from the N-terminus, the 171-residue chain is Serine acetyltransferase (171 aa).

It belongs to the transferase hexapeptide repeat family.

It is found in the cytoplasm. The catalysed reaction is L-serine + acetyl-CoA = O-acetyl-L-serine + CoA. Its pathway is amino-acid biosynthesis; L-cysteine biosynthesis; L-cysteine from L-serine: step 1/2. This Helicobacter pylori (strain J99 / ATCC 700824) (Campylobacter pylori J99) protein is Serine acetyltransferase (cysE).